Here is a 292-residue protein sequence, read N- to C-terminus: MIQGSIVAIVTPMHADGALDLPGLRKLIDWHIAEGTDGIVIVGTTGESPTVSVDEHCELIRVAVEHTAKRIPIIAGTGGNSTSEAIELTQFAKDVGADASLQVVPYYNRPTQEGMYQHFKKIVEAVDLPAILYNVPGRTVADMSNETILRLAQIPSVIGVKDATGNISRGIDLMRLRPKDFAVYSGDDATAMALMLCGANGNISVTANIAPRGMHQLCDAAINQRVAEAIAINNKLVPLHNKLFIEPNPVPLKWAMAEIGLIPSGMRLPIVPLAAEYHDIVRAAMRESGVLQ.

Thr-45 contributes to the pyruvate binding site. The active-site Proton donor/acceptor is Tyr-133. Residue Lys-161 is the Schiff-base intermediate with substrate of the active site. Residue Ile-203 coordinates pyruvate.

This sequence belongs to the DapA family. Homotetramer; dimer of dimers.

The protein resides in the cytoplasm. It catalyses the reaction L-aspartate 4-semialdehyde + pyruvate = (2S,4S)-4-hydroxy-2,3,4,5-tetrahydrodipicolinate + H2O + H(+). It functions in the pathway amino-acid biosynthesis; L-lysine biosynthesis via DAP pathway; (S)-tetrahydrodipicolinate from L-aspartate: step 3/4. In terms of biological role, catalyzes the condensation of (S)-aspartate-beta-semialdehyde [(S)-ASA] and pyruvate to 4-hydroxy-tetrahydrodipicolinate (HTPA). This chain is 4-hydroxy-tetrahydrodipicolinate synthase, found in Herminiimonas arsenicoxydans.